The following is a 632-amino-acid chain: tRNA 5-methylaminomethyl-2-thiouridine biosynthesis bifunctional protein MnmC (632 aa).

Residues 1–247 (MNSRIFPAAM…KWHMTLGQRL (247 aa)) form a tRNA (mnm(5)s(2)U34)-methyltransferase region. An FAD-dependent cmnm(5)s(2)U34 oxidoreductase region spans residues 267–632 (VGAGLAGAAV…TDLLAQIAPR (366 aa)).

This sequence in the N-terminal section; belongs to the methyltransferase superfamily. tRNA (mnm(5)s(2)U34)-methyltransferase family. The protein in the C-terminal section; belongs to the DAO family. FAD is required as a cofactor.

The protein localises to the cytoplasm. The catalysed reaction is 5-aminomethyl-2-thiouridine(34) in tRNA + S-adenosyl-L-methionine = 5-methylaminomethyl-2-thiouridine(34) in tRNA + S-adenosyl-L-homocysteine + H(+). Functionally, catalyzes the last two steps in the biosynthesis of 5-methylaminomethyl-2-thiouridine (mnm(5)s(2)U) at the wobble position (U34) in tRNA. Catalyzes the FAD-dependent demodification of cmnm(5)s(2)U34 to nm(5)s(2)U34, followed by the transfer of a methyl group from S-adenosyl-L-methionine to nm(5)s(2)U34, to form mnm(5)s(2)U34. This is tRNA 5-methylaminomethyl-2-thiouridine biosynthesis bifunctional protein MnmC from Bordetella bronchiseptica (strain ATCC BAA-588 / NCTC 13252 / RB50) (Alcaligenes bronchisepticus).